We begin with the raw amino-acid sequence, 757 residues long: GTPase-activating protein GYP7 (757 aa).

In terms of domain architecture, Rab-GAP TBC spans G395–Y640. Residues G482–F507 are disordered. The segment covering T498–F507 has biased composition (acidic residues).

Its function is as follows. Most effectively accelerate the intrinsic GTPase activity of YPT7. It is also active, but to a lesser extent, on YPT31, YPT32 and YPT1. YPT6 and SEC4. This chain is GTPase-activating protein GYP7 (GYP7), found in Debaryomyces hansenii (strain ATCC 36239 / CBS 767 / BCRC 21394 / JCM 1990 / NBRC 0083 / IGC 2968) (Yeast).